The following is a 319-amino-acid chain: ATP-dependent 6-phosphofructokinase (319 aa).

Residues Gly10, 71–72 (RS), and 101–104 (GDGS) each bind ATP. Asp102 contacts Mg(2+). 125–127 (TID) is a substrate binding site. The active-site Proton acceptor is the Asp127. Arg154 serves as a coordination point for ADP. Substrate-binding positions include Arg162 and 169 to 171 (MGR). 185 to 187 (GAE) contacts ADP. Residues Glu223, Arg244, and 250-253 (HVQR) each bind substrate.

This sequence belongs to the phosphofructokinase type A (PFKA) family. ATP-dependent PFK group I subfamily. Prokaryotic clade 'B1' sub-subfamily. As to quaternary structure, homotetramer. Mg(2+) is required as a cofactor.

The protein resides in the cytoplasm. The enzyme catalyses beta-D-fructose 6-phosphate + ATP = beta-D-fructose 1,6-bisphosphate + ADP + H(+). The protein operates within carbohydrate degradation; glycolysis; D-glyceraldehyde 3-phosphate and glycerone phosphate from D-glucose: step 3/4. Allosterically activated by ADP and other diphosphonucleosides, and allosterically inhibited by phosphoenolpyruvate. Functionally, catalyzes the phosphorylation of D-fructose 6-phosphate to fructose 1,6-bisphosphate by ATP, the first committing step of glycolysis. The polypeptide is ATP-dependent 6-phosphofructokinase (Wolinella succinogenes (strain ATCC 29543 / DSM 1740 / CCUG 13145 / JCM 31913 / LMG 7466 / NCTC 11488 / FDC 602W) (Vibrio succinogenes)).